The chain runs to 207 residues: Large ribosomal subunit protein uL4 (207 aa).

Residues 48 to 89 (THKVKNRSEVSGGGRKPWRQKGTGRARQGSIRSPQWRGGGTV) form a disordered region.

It belongs to the universal ribosomal protein uL4 family. Part of the 50S ribosomal subunit.

Its function is as follows. One of the primary rRNA binding proteins, this protein initially binds near the 5'-end of the 23S rRNA. It is important during the early stages of 50S assembly. It makes multiple contacts with different domains of the 23S rRNA in the assembled 50S subunit and ribosome. Forms part of the polypeptide exit tunnel. The chain is Large ribosomal subunit protein uL4 from Bacillus cytotoxicus (strain DSM 22905 / CIP 110041 / 391-98 / NVH 391-98).